Here is a 170-residue protein sequence, read N- to C-terminus: Inducible metalloproteinase inhibitor protein (170 aa).

Positions 1-19 are cleaved as a signal peptide; sequence MKCLLYLCLWCYCVLVSSS. N-linked (GlcNAc...) asparagine glycans are attached at residues Asn-48 and Asn-149.

Cleaved. In terms of processing, five disulfide bonds are present. When artificially cleaved by thermolysin between Asn-56 and Ile-57, the two obtained chains (called heavy and light chains) remain linked. Post-translationally, the N-terminus is blocked.

In terms of biological role, inhibits thermolysin, bacillolysin and pseudolysin, B.polymyxa metalloprotease and human MMP1 and MMP3. No activity on trypsin or cysteine protease papain. This is Inducible metalloproteinase inhibitor protein (IMPI) from Galleria mellonella (Greater wax moth).